The sequence spans 446 residues: Transcription factor Sox-10 (446 aa).

Disordered regions lie at residues 1 to 60, 153 to 191, and 203 to 264; these read MSDD…SEDE, RLRM…AEGG, and HLDH…IDFG. The span at 36–48 shows a compositional bias: acidic residues; sequence DDDDDDDEEEEEE. Lys52 is covalently cross-linked (Glycyl lysine isopeptide (Lys-Gly) (interchain with G-Cter in SUMO)). The segment at 56–96 is dimerization (DIM); it reads DSEDERFPVCIREAVSQVLNGYDWTLVPMPVRVNGGSKSKP. Residues 98 to 166 constitute a DNA-binding region (HMG box); that stretch reads VKRPMNAFMV…QHKKDHPDYK (69 aa). Basic and acidic residues predominate over residues 153 to 167; the sequence is RLRMQHKKDHPDYKY. Over residues 213-226 the composition is skewed to polar residues; that stretch reads SDGNSEHSTGQSHG. A transactivation domain (TAM) region spans residues 217-303; the sequence is SEHSTGQSHG…NGHAGHPSHI (87 aa). The segment covering 243-257 has biased composition (basic and acidic residues); the sequence is SDGKRDGSHALREGG. The transactivation domain (TAC) stretch occupies residues 337 to 446; that stretch reads KAQVKTESSS…QPVYTTLSRP (110 aa). Lys341 is covalently cross-linked (Glycyl lysine isopeptide (Lys-Gly) (interchain with G-Cter in SUMO)). Positions 421–446 are disordered; it reads SDPPSVAQSHSPTHWEQPVYTTLSRP. Polar residues predominate over residues 426–446; the sequence is VAQSHSPTHWEQPVYTTLSRP.

In terms of assembly, interacts with the sumoylation factors ube2i/ubc9 and sumo1. In terms of processing, sumoylated. In terms of tissue distribution, first expressed at stages 13/14 at the lateral edges of the neural plate, in the neural crest forming region. By stage 22, neural crest cells migrate in the cranial region and strong expression is seen in the crest cells that populate the branchial arches as well as those migrating in the frontonasal region. Also strongly expressed in the trunk neural crest. Expression in the otic vesicle begins around stage 25 and persists until at least stage 40. At stage 30, expression is down-regulated in the cranial neural crest of the pharyngeal arches but persists in the trunk neural crest, in the otic vesicle and in discrete domains adjacent to the hindbrain. At stage 40, expression is restricted to the otic vesicle, differentiated pigment cells, and in several cranial ganglia.

It is found in the cytoplasm. It localises to the nucleus. In terms of biological role, acts early in neural crest formation, functioning redundantly with the other group E Sox factors sox8 and sox9 to induce neural crest progenitors. Acts downstream of wnt-signaling at the neural plate border. Involved in the specification of neural crest progenitors fated to form the pigment cell lineage. In Xenopus laevis (African clawed frog), this protein is Transcription factor Sox-10 (sox10).